Reading from the N-terminus, the 317-residue chain is Olfactory receptor 8B3 (317 aa).

The Extracellular portion of the chain corresponds to methionine 1–tyrosine 32. N-linked (GlcNAc...) asparagine glycosylation is present at asparagine 8. A helical transmembrane segment spans residues leucine 33–glycine 53. The Cytoplasmic segment spans residues leucine 54–histidine 59. The helical transmembrane segment at threonine 60–phenylalanine 80 threads the bilayer. Topologically, residues serine 81–tyrosine 97 are extracellular. Residues alanine 98–leucine 118 traverse the membrane as a helical segment. The Cytoplasmic segment spans residues threonine 119–lysine 136. The helical transmembrane segment at valine 137–alanine 157 threads the bilayer. At glycine 158–glutamate 199 the chain is on the extracellular side. The chain crosses the membrane as a helical span at residues valine 200–serine 220. Residues tyrosine 221–serine 242 lie on the Cytoplasmic side of the membrane. Residues threonine 243 to leucine 263 form a helical membrane-spanning segment. The Extracellular segment spans residues lysine 264–lysine 274. A helical membrane pass occupies residues isoleucine 275–leucine 294. Over arginine 295–asparagine 317 the chain is Cytoplasmic.

This sequence belongs to the G-protein coupled receptor 1 family.

The protein resides in the cell membrane. Its function is as follows. Odorant receptor. This chain is Olfactory receptor 8B3, found in Mus musculus (Mouse).